Here is a 192-residue protein sequence, read N- to C-terminus: Transcription termination/antitermination protein NusG (192 aa).

The KOW domain maps to 140-168; it reads VGEIVIVTDGPFETFTGTVEEIDQEKNRL.

It belongs to the NusG family.

Its function is as follows. Participates in transcription elongation, termination and antitermination. This is Transcription termination/antitermination protein NusG from Rickettsia felis (strain ATCC VR-1525 / URRWXCal2) (Rickettsia azadi).